The following is a 474-amino-acid chain: MASPTISSMEQYTPSSKDEKIVPLHGDAAGSDTEKGESREVFQENVDGVEFRTVSWQRATVVFLKINFAMSILAIPGALGALGSVGGSLCIVGYTSLNVYTALVLGDFKHNHTECHTLADMMGLIWGRWGRELVGVQIIVAQVLISAGGIVTSAIGLNALSDHGTCTVMFALVSAILITLFSSIRTFARLGWLTWFGFITFVLGVFIFVVAVTQVDRPAAAPKTGDFELGWAPIAYPSFVVGMINATNIFISTCGSSMFLPVISEMKRPHDYRKACLVAGFIVGAMYLSFSLVIYRWCGTWISTPAFGSAGPLIKKVAYGVSLPGLILGVGIYQHVAAKYAFVRILRDSEHLQANTFTHWGTWLGINLALGTAAFIVAEAVPILNYLLGLAGSLCFAPFSLVFPALLWMYDFKSYKTGTLGQKIKYGLHILIMILGFYMIVAGTYSVAVLIKEAFNTGAIAKVFDCADNSGFVQ.

The span at 1 to 15 (MASPTISSMEQYTPS) shows a compositional bias: polar residues. Positions 1-39 (MASPTISSMEQYTPSSKDEKIVPLHGDAAGSDTEKGESR) are disordered. The next 10 membrane-spanning stretches (helical) occupy residues 72 to 92 (ILAIPGALGALGSVGGSLCIV), 133 to 153 (LVGVQIIVAQVLISAGGIVTS), 164 to 184 (GTCTVMFALVSAILITLFSSI), 192 to 212 (WLTWFGFITFVLGVFIFVVAV), 231 to 251 (WAPIAYPSFVVGMINATNIFI), 275 to 295 (ACLVAGFIVGAMYLSFSLVIY), 317 to 337 (VAYGVSLPGLILGVGIYQHVA), 364 to 384 (LGINLALGTAAFIVAEAVPIL), 387 to 407 (LLGLAGSLCFAPFSLVFPALL), and 431 to 451 (LIMILGFYMIVAGTYSVAVLI).

Belongs to the amino acid/polyamine transporter 2 family.

It is found in the membrane. Transmembrane transporter; part of the Fusarium detoxification of benzoxazolinone cluster 2 (FDB2) involved in the degradation of benzoxazolinones produced by the host plant. Maize, wheat, and rye produce the 2 benzoxazinone phytoanticipins 2,4-dihy-droxy-7-methoxy-1,4-benzoxazin-3-one (DIMBOA) and 2,4-dihydroxy-1,4-benzoxazin-3-one (DIBOA) that, due to their inherent instability once released, spontaneously degrade to the more stable corresponding benzoxazolinones, 6-methoxy-2-benzoxazolinone (MBOA) and 2-benzoxazolinone (BOA), respectively. Might be involved in the transport of metabolites of benzoxazolinone degradation. The polypeptide is Transmembrane transporter FVEG_12640 (Gibberella moniliformis (strain M3125 / FGSC 7600) (Maize ear and stalk rot fungus)).